The chain runs to 263 residues: Chymotrypsinogen B (263 aa).

A signal peptide spans 1–18 (MASLWLLSCFSLVGAAFG). 5 disulfide bridges follow: cysteine 19/cysteine 140, cysteine 60/cysteine 76, cysteine 154/cysteine 219, cysteine 186/cysteine 200, and cysteine 209/cysteine 238. A Peptidase S1 domain is found at 34 to 261 (IVNGEDAVPG…LIPWVQKILA (228 aa)). Histidine 75 serves as the catalytic Charge relay system. Serine 93 is modified (phosphoserine). Catalysis depends on aspartate 120, which acts as the Charge relay system. Catalysis depends on serine 213, which acts as the Charge relay system.

It belongs to the peptidase S1 family.

It is found in the secreted. It localises to the extracellular space. It catalyses the reaction Preferential cleavage: Tyr-|-Xaa, Trp-|-Xaa, Phe-|-Xaa, Leu-|-Xaa.. The protein is Chymotrypsinogen B of Homo sapiens (Human).